The chain runs to 567 residues: Urease subunit alpha (567 aa).

Positions 129 to 567 constitute a Urease domain; sequence GGIDTHIHWI…LPMAQRYFLF (439 aa). Ni(2+)-binding residues include His-134, His-136, and Lys-217. The residue at position 217 (Lys-217) is an N6-carboxylysine. Position 219 (His-219) interacts with substrate. 2 residues coordinate Ni(2+): His-246 and His-272. The active-site Proton donor is His-320. Asp-360 contacts Ni(2+).

The protein belongs to the metallo-dependent hydrolases superfamily. Urease alpha subunit family. In terms of assembly, heterotrimer of UreA (gamma), UreB (beta) and UreC (alpha) subunits. Three heterotrimers associate to form the active enzyme. The apoenzyme interacts with an accessory complex composed of UreD, UreF and UreG, which is required for the assembly of the nickel containing metallocenter of UreC. The UreE protein may also play a direct role as a metallochaperone in nickel transfer to the urease apoprotein. The cofactor is Ni cation. Post-translationally, carboxylation allows a single lysine to coordinate two nickel ions.

It is found in the cytoplasm. It catalyses the reaction urea + 2 H2O + H(+) = hydrogencarbonate + 2 NH4(+). Its pathway is nitrogen metabolism; urea degradation; CO(2) and NH(3) from urea (urease route): step 1/1. Its activity is regulated as follows. The apoenzyme can be activated in vitro in the presence of nickel ions and carbon dioxide, which promotes carboxylation of Lys-217. The protein is Urease subunit alpha of Klebsiella aerogenes (Enterobacter aerogenes).